We begin with the raw amino-acid sequence, 223 residues long: Holliday junction branch migration complex subunit RuvA (223 aa).

The interval 1-64 is domain I; it reads MIGRIAGVIL…EDLLQLFGFP (64 aa). The domain II stretch occupies residues 65-143; sequence TLLEKEWHRL…AVMALGGALT (79 aa). The segment at 144–169 is flexible linker; sequence VDPGPLPEVELVEAAVPAPVPAKAAP. Positions 170-223 are domain III; that stretch reads SSAQATADALSALGNLGYAPSEAASAVAEAAAREPAAPTAALIRAALRLLAPKE.

It belongs to the RuvA family. As to quaternary structure, homotetramer. Forms an RuvA(8)-RuvB(12)-Holliday junction (HJ) complex. HJ DNA is sandwiched between 2 RuvA tetramers; dsDNA enters through RuvA and exits via RuvB. An RuvB hexamer assembles on each DNA strand where it exits the tetramer. Each RuvB hexamer is contacted by two RuvA subunits (via domain III) on 2 adjacent RuvB subunits; this complex drives branch migration. In the full resolvosome a probable DNA-RuvA(4)-RuvB(12)-RuvC(2) complex forms which resolves the HJ.

The protein resides in the cytoplasm. The RuvA-RuvB-RuvC complex processes Holliday junction (HJ) DNA during genetic recombination and DNA repair, while the RuvA-RuvB complex plays an important role in the rescue of blocked DNA replication forks via replication fork reversal (RFR). RuvA specifically binds to HJ cruciform DNA, conferring on it an open structure. The RuvB hexamer acts as an ATP-dependent pump, pulling dsDNA into and through the RuvAB complex. HJ branch migration allows RuvC to scan DNA until it finds its consensus sequence, where it cleaves and resolves the cruciform DNA. The sequence is that of Holliday junction branch migration complex subunit RuvA from Paracoccus denitrificans (strain Pd 1222).